The chain runs to 271 residues: Tryptophan synthase alpha chain (271 aa).

Catalysis depends on proton acceptor residues Glu49 and Asp60.

It belongs to the TrpA family. As to quaternary structure, tetramer of two alpha and two beta chains.

The catalysed reaction is (1S,2R)-1-C-(indol-3-yl)glycerol 3-phosphate + L-serine = D-glyceraldehyde 3-phosphate + L-tryptophan + H2O. The protein operates within amino-acid biosynthesis; L-tryptophan biosynthesis; L-tryptophan from chorismate: step 5/5. Functionally, the alpha subunit is responsible for the aldol cleavage of indoleglycerol phosphate to indole and glyceraldehyde 3-phosphate. This is Tryptophan synthase alpha chain from Leptothrix cholodnii (strain ATCC 51168 / LMG 8142 / SP-6) (Leptothrix discophora (strain SP-6)).